A 150-amino-acid polypeptide reads, in one-letter code: UPF0178 protein AZOSEA36080 (150 aa).

This sequence belongs to the UPF0178 family.

The sequence is that of UPF0178 protein AZOSEA36080 from Aromatoleum aromaticum (strain DSM 19018 / LMG 30748 / EbN1) (Azoarcus sp. (strain EbN1)).